The following is a 144-amino-acid chain: MKLNELKPAEGSRKVRNRVGRGDSSGNGKTAGRGQKGQKARSKTRLGFEGGQMPLYRRIPKRGFTNINRKEFAVVNLSALNVFDDGAEVTPAALVEAGIVKNEKAGIKILGNGELSKKLTVKAAKFSKSAAEAIEAAGGKTEVI.

A compositionally biased stretch (basic and acidic residues) spans M1 to R13. The disordered stretch occupies residues M1–G47. Positions D23–Q35 are enriched in gly residues.

Belongs to the universal ribosomal protein uL15 family. As to quaternary structure, part of the 50S ribosomal subunit.

In terms of biological role, binds to the 23S rRNA. This chain is Large ribosomal subunit protein uL15, found in Levilactobacillus brevis (strain ATCC 367 / BCRC 12310 / CIP 105137 / JCM 1170 / LMG 11437 / NCIMB 947 / NCTC 947) (Lactobacillus brevis).